The following is a 424-amino-acid chain: PtdIns3K complex I subunit atg38 (424 aa).

Residues 50 to 78 (LIKRCANNQIEELMVRIRELRESLPNKQT) are a coiled coil. The interval 73-212 (LPNKQTPISM…DPAYQNTNEQ (140 aa)) is required for interaction with atg8. An AIM motif is present at residues 178-181 (FLIV). Basic and acidic residues predominate over residues 268–284 (LSEEEMGRSHKREESFK). The segment at 268–299 (LSEEEMGRSHKREESFKRAFGHASSSESSIGE) is disordered. Positions 390–420 (TVDSQLKIKQLETQIATLQKQLEQFQTSTLD) form a coiled coil.

The protein belongs to the ATG38 family. Component of the autophagy-specific vps34 PI3-kinase complex I composed of vps15, atg6, pik3/vps34, atg14 and atg38. Interacts (via AIM motif) with atg8; the interaction is direct and leads to recruitment of the autophagy-specific vps34 PI3-kinase complex I to the phagophore assembly site.

It localises to the preautophagosomal structure membrane. Its subcellular location is the cytoplasm. The protein localises to the cytosol. Its function is as follows. Functions as a part of the autophagy-specific VPS34 PI3-kinase complex I that plays a role in autophagosome assembly. This complex is essential to recruit the atg8-phosphatidylinositol conjugate and the atg12-atg5 conjugate to the pre-autophagosomal structure. By binding to atg8 at the phagophore assembly site, atg38 helps establish a positive feedback loop for recruitment of phagophore assembly proteins, including atg8. The protein is PtdIns3K complex I subunit atg38 of Schizosaccharomyces pombe (strain 972 / ATCC 24843) (Fission yeast).